Consider the following 1228-residue polypeptide: AT-rich interactive domain-containing protein 4B (1228 aa).

Disordered regions lie at residues 123-167 and 266-307; these read LPLT…DDRK and KTEL…PFPE. Residues S276, S295, and S296 each carry the phosphoserine modification. The span at 277–305 shows a compositional bias: acidic residues; the sequence is EAEEEEEEEDDEKEKEDNSSEEEEEIEPF. The region spanning 306 to 398 is the ARID domain; sequence PEERENFLQQ…YLYGFEEYCR (93 aa). Glycyl lysine isopeptide (Lys-Gly) (interchain with G-Cter in SUMO2) cross-links involve residues K428 and K461. Over residues 437–464 the composition is skewed to basic and acidic residues; that stretch reads EVNVEDSKNMIPKEETPAEDESERKENI. 6 disordered regions span residues 437–466, 479–525, 539–606, 620–802, 825–1129, and 1168–1204; these read EVNVEDSKNMIPKEETPAEDESERKENIKP, PAQS…EQAR, RPAD…SDTG, LQAS…EEKR, LNNS…RLPK, and SEVASIDRRRKRLKKKERESAATSSSSSSPSSSSITA. At S482 the chain carries Phosphoserine. Over residues 483-511 the composition is skewed to basic and acidic residues; it reads DQEKEANITKLEEKESLEDKDGATARAEE. Residues 546 to 555 show a composition bias toward basic residues; the sequence is PKIKHRKKIK. Residues 556–569 are compositionally biased toward basic and acidic residues; the sequence is NKLDKEKDRDEKYS. Residues S579, S581, and S588 each carry the phosphoserine modification. Basic and acidic residues predominate over residues 596–606; the sequence is DLADAKNSDTG. S630 carries the post-translational modification Phosphoserine. 2 stretches are compositionally biased toward basic and acidic residues: residues 635–667 and 691–700; these read ERCAQDPESSSKDESKVEHSAHSRSELISKEEL and SPERLRKDVE. K664 participates in a covalent cross-link: Glycyl lysine isopeptide (Lys-Gly) (interchain with G-Cter in SUMO2). S691 and S703 each carry phosphoserine. Residues 701 to 713 are compositionally biased toward acidic residues; the sequence is AISEDTDFEEEDE. The residue at position 706 (T706) is a Phosphothreonine. Positions 721–730 are enriched in basic and acidic residues; that stretch reads VKKDTTDKAL. Positions 744 to 753 are enriched in polar residues; that stretch reads IQTNCLQSGS. Basic and acidic residues-rich tracts occupy residues 755–765, 825–843, and 911–926; these read GKKEDRTKSKE, LNNSDERLQNNRAKDRKDV, and KPVEEKPLEVSDRKTE. Residues 927–937 show a composition bias toward polar residues; that stretch reads FPSSGSNSVLN. S930 is modified (phosphoserine). A Phosphothreonine modification is found at T942. The segment covering 944–965 has biased composition (low complexity); that stretch reads ESPSSVTVTETSQQQSSVTVSV. S945 is subject to Phosphoserine. Positions 972–981 are enriched in basic and acidic residues; the sequence is EEVRSIKSET. Low complexity predominate over residues 1003–1017; the sequence is SSPAGFNASVSSSSS. The span at 1046 to 1064 shows a compositional bias: basic residues; it reads KKQKRSHKATVVNNKKKGK. At T1066 the chain carries Phosphothreonine. A phosphoserine mark is found at S1068, S1069, S1071, and S1075. Over residues 1112 to 1124 the composition is skewed to basic and acidic residues; sequence KNGDKDPDLKEPS. Residues 1141-1186 adopt a coiled-coil conformation; sequence ENMTSAERISILQEKLQEIRKHYLSLKSEVASIDRRRKRLKKKERE. The span at 1188–1204 shows a compositional bias: low complexity; the sequence is AATSSSSSSPSSSSITA.

As to quaternary structure, component of a Sin3A corepressor complex consisting of SIN3A, SAP130, SUDS3/SAP45, SAP180, HDAC1 and HDAC2. Interacts with ARID4A. Interacts with AR.

Its subcellular location is the nucleus. Its function is as follows. Acts as a transcriptional repressor. May function in the assembly and/or enzymatic activity of the Sin3A corepressor complex or in mediating interactions between the complex and other regulatory complexes. Plays a role in the regulation of epigenetic modifications at the PWS/AS imprinting center near the SNRPN promoter, where it might function as part of a complex with RB1 and ARID4A. Involved in spermatogenesis, together with ARID4A, where it functions as a transcriptional coactivator for AR (androgen receptor) and enhances expression of genes required for sperm maturation. Regulates expression of the tight junction protein CLDN3 in the testis, which is important for integrity of the blood-testis barrier. Plays a role in myeloid homeostasis where it regulates the histone methylation state of bone marrow cells and expression of various genes involved in hematopoiesis. May function as a leukemia suppressor. This Rattus norvegicus (Rat) protein is AT-rich interactive domain-containing protein 4B (Arid4b).